The sequence spans 90 residues: MNKTQLIDVIAEKAELSKTQAKAALESTLAAITESLKEGDAVQLVGFGTFKVNHRAERTGRNPQTGKEIKIAAANVPAFVSGKALKDAVK.

The protein belongs to the bacterial histone-like protein family. As to quaternary structure, heterodimer of an alpha and a beta chain.

Functionally, histone-like DNA-binding protein which is capable of wrapping DNA to stabilize it, and thus to prevent its denaturation under extreme environmental conditions. The protein is DNA-binding protein HU-alpha (hupA) of Escherichia coli O157:H7.